Consider the following 459-residue polypeptide: MKNYTPKEIVEELDKYIVGQKEAKKSVAVALRNRYRRNLLPDDFKEEVTPKNIIMVGPTGVGKTEIARRIAKLVEAPFVKVEATKFTEVGYVGRDVDSMVRDLVEAAVRMVKEEKLKKVTEKAKKIAEDRLIDYIIGKRKKQTKNPFEVLFNYPSAEKSEETEEESMQYKREEIRQKLRNGELDNYVVEIEVTDTSTPMLEMYTNLGSEEMNINLQDIFADILPKKKKIKKVPVYEAKRILESEEAQNLIDMDEVIEEAIKRAENDGIIFIDEIDKIASSGYTAGPDVSREGVQRDILPIIEGCTVMTKYGPVKTDHILFIAAGAFNVAKVSDLIPELQGRFPVRVNLKPLTKEDFIRILKEPKNALTKQYQELLRTEGIEVKYTDEAIEAIAEVAYLINQQSEDIGARRLHTVMEKLFEELSFNAPELGGQQIVITEEYVKEQLKDSLNKYEVSKYIL.

ATP is bound by residues Val18, 60–65, Asp272, Glu337, and Arg409; that span reads GVGKTE.

It belongs to the ClpX chaperone family. HslU subfamily. A double ring-shaped homohexamer of HslV is capped on each side by a ring-shaped HslU homohexamer. The assembly of the HslU/HslV complex is dependent on binding of ATP.

It localises to the cytoplasm. Functionally, ATPase subunit of a proteasome-like degradation complex; this subunit has chaperone activity. The binding of ATP and its subsequent hydrolysis by HslU are essential for unfolding of protein substrates subsequently hydrolyzed by HslV. HslU recognizes the N-terminal part of its protein substrates and unfolds these before they are guided to HslV for hydrolysis. The protein is ATP-dependent protease ATPase subunit HslU of Thermoanaerobacter pseudethanolicus (strain ATCC 33223 / 39E) (Clostridium thermohydrosulfuricum).